The primary structure comprises 295 residues: Transcription factor bHLH19 (295 aa).

One can recognise a bHLH domain in the interval 115–164 (VLAKEHVLAERKRREKLSEKFIALSALLPGLKKADKVTILDDAISRMKQL).

In terms of assembly, homodimer. As to expression, expressed in roots and leaves.

The protein localises to the nucleus. In Arabidopsis thaliana (Mouse-ear cress), this protein is Transcription factor bHLH19 (BHLH19).